The chain runs to 212 residues: uncharacterized protein (212 aa).

A signal peptide spans 1 to 18 (MQLTQVLAVAILAAGVSA). A disordered region spans residues 108 to 180 (VSHNRVNAKQ…KDYGHKDYGH (73 aa)). Positions 117-180 (QRRDDKKDYG…KDYGHKDYGH (64 aa)) are enriched in basic and acidic residues. A 15 X 5 AA tandem repeats of K-D-Y-G-H region spans residues 120 to 210 (DDKKDYGKND…KDYGYKGYDD (91 aa)). Repeat 1 spans residues 123 to 127 (KDYGK). One copy of the 2; truncated repeat lies at 128 to 132 (NDYGK). Tandem repeats lie at residues 133–137 (KDYGK), 138–142 (KDYGK), and 143–147 (KDYGK). One copy of the 6; truncated repeat lies at 148 to 152 (KEYDP). 5 tandem repeats follow at residues 166 to 170 (KDYGH), 171 to 175 (KDYGH), 176 to 180 (KDYGH), 181 to 185 (KDYGH), and 186 to 190 (KDYGH). One copy of the 12; truncated repeat lies at 191 to 195 (DDYGY). A 13; truncated repeat occupies 196 to 200 (KGYDD). Residues 201–205 (KDYGY) form a 14; truncated repeat. One copy of the 15; truncated repeat lies at 206 to 210 (KGYDD).

The protein localises to the secreted. This is an uncharacterized protein from Arthroderma benhamiae (strain ATCC MYA-4681 / CBS 112371) (Trichophyton mentagrophytes).